Here is a 437-residue protein sequence, read N- to C-terminus: Glutamate-1-semialdehyde 2,1-aminomutase 1 (437 aa).

Position 268 is an N6-(pyridoxal phosphate)lysine (Lys-268).

It belongs to the class-III pyridoxal-phosphate-dependent aminotransferase family. HemL subfamily. In terms of assembly, homodimer. It depends on pyridoxal 5'-phosphate as a cofactor.

It is found in the cytoplasm. The catalysed reaction is (S)-4-amino-5-oxopentanoate = 5-aminolevulinate. Its pathway is porphyrin-containing compound metabolism; protoporphyrin-IX biosynthesis; 5-aminolevulinate from L-glutamyl-tRNA(Glu): step 2/2. This is Glutamate-1-semialdehyde 2,1-aminomutase 1 from Halalkalibacterium halodurans (strain ATCC BAA-125 / DSM 18197 / FERM 7344 / JCM 9153 / C-125) (Bacillus halodurans).